The sequence spans 313 residues: Porphobilinogen deaminase (313 aa).

An S-(dipyrrolylmethanemethyl)cysteine modification is found at C242.

It belongs to the HMBS family. As to quaternary structure, monomer. The cofactor is dipyrromethane.

The catalysed reaction is 4 porphobilinogen + H2O = hydroxymethylbilane + 4 NH4(+). Its pathway is porphyrin-containing compound metabolism; protoporphyrin-IX biosynthesis; coproporphyrinogen-III from 5-aminolevulinate: step 2/4. Tetrapolymerization of the monopyrrole PBG into the hydroxymethylbilane pre-uroporphyrinogen in several discrete steps. In Klebsiella pneumoniae subsp. pneumoniae (strain ATCC 700721 / MGH 78578), this protein is Porphobilinogen deaminase.